A 297-amino-acid polypeptide reads, in one-letter code: NAD(P)-dependent methylenetetrahydromethanopterin dehydrogenase (297 aa).

To M.extorquens MtdA. In terms of assembly, homohexamer.

It localises to the cytoplasm. The enzyme catalyses 5,10-methylenetetrahydromethanopterin + NAD(+) = 5,10-methenyl-5,6,7,8-tetrahydromethanopterin + NADH. The catalysed reaction is 5,10-methylenetetrahydromethanopterin + NADP(+) = 5,10-methenyl-5,6,7,8-tetrahydromethanopterin + NADPH. The protein operates within one-carbon metabolism; formaldehyde degradation; formate from formaldehyde (H(4)MPT route): step 2/5. Its function is as follows. Catalyzes the dehydrogenation of methylene-H(4)MPT. This Methylorubrum extorquens (strain ATCC 14718 / DSM 1338 / JCM 2805 / NCIMB 9133 / AM1) (Methylobacterium extorquens) protein is NAD(P)-dependent methylenetetrahydromethanopterin dehydrogenase (mtdB).